A 264-amino-acid polypeptide reads, in one-letter code: 4-hydroxy-tetrahydrodipicolinate reductase (264 aa).

An NAD(+)-binding site is contributed by 9-14 (GCSGRM). An NADP(+)-binding site is contributed by arginine 36. NAD(+) is bound by residues 100-102 (GTT) and 121-124 (SANM). Histidine 154 functions as the Proton donor/acceptor in the catalytic mechanism. (S)-2,3,4,5-tetrahydrodipicolinate is bound at residue histidine 155. Lysine 158 functions as the Proton donor in the catalytic mechanism. 164-165 (GT) contributes to the (S)-2,3,4,5-tetrahydrodipicolinate binding site.

Belongs to the DapB family.

It localises to the cytoplasm. The enzyme catalyses (S)-2,3,4,5-tetrahydrodipicolinate + NAD(+) + H2O = (2S,4S)-4-hydroxy-2,3,4,5-tetrahydrodipicolinate + NADH + H(+). The catalysed reaction is (S)-2,3,4,5-tetrahydrodipicolinate + NADP(+) + H2O = (2S,4S)-4-hydroxy-2,3,4,5-tetrahydrodipicolinate + NADPH + H(+). It participates in amino-acid biosynthesis; L-lysine biosynthesis via DAP pathway; (S)-tetrahydrodipicolinate from L-aspartate: step 4/4. Its function is as follows. Catalyzes the conversion of 4-hydroxy-tetrahydrodipicolinate (HTPA) to tetrahydrodipicolinate. The sequence is that of 4-hydroxy-tetrahydrodipicolinate reductase from Wolbachia sp. subsp. Brugia malayi (strain TRS).